Consider the following 398-residue polypeptide: T-box transcription factor TBX1 (398 aa).

The segment at A23 to F72 is disordered. Over residues G29–Y38 the composition is skewed to low complexity. Pro residues-rich tracts occupy residues P40–Y50 and A60–A69. The T-box DNA-binding region spans L119–D297.

In terms of assembly, binds DNA as a dimer. Interacts with DSCR6. Interacts with NKX2-5.

Its subcellular location is the nucleus. Its function is as follows. Transcription factor that plays a key role in cardiovascular development by promoting pharyngeal arch segmentation during embryonic development. Also involved in craniofacial muscle development. Together with NKX2-5, acts as a regulator of asymmetric cardiac morphogenesis by promoting expression of PITX2. Acts upstream of TBX1 for the formation of the thymus and parathyroid glands from the third pharyngeal pouch. Required for hair follicle stem cell self-renewal. Binds to the palindromic T site 5'-TTCACACCTAGGTGTGAA-3' DNA sequence. The polypeptide is T-box transcription factor TBX1 (Homo sapiens (Human)).